The chain runs to 93 residues: MAERRVNVGWAEGLHARPASIFVRAATATGVPVTIAKADGSPVNAASMLAVLGLGAQGGEEIVLASDAEGAEAALERLAKLVAEGLEELPETV.

Residues 2-89 (AERRVNVGWA…KLVAEGLEEL (88 aa)) form the HPr domain. H15 (pros-phosphohistidine intermediate) is an active-site residue.

It belongs to the HPr family.

It is found in the cytoplasm. Functionally, general (non sugar-specific) component of the phosphoenolpyruvate-dependent sugar phosphotransferase system (sugar PTS). This major carbohydrate active-transport system catalyzes the phosphorylation of incoming sugar substrates concomitantly with their translocation across the cell membrane. The phosphoryl group from phosphoenolpyruvate (PEP) is transferred to the phosphoryl carrier protein HPr by enzyme I. Phospho-HPr then transfers it to the PTS EIIA domain. This chain is Phosphocarrier protein HPr (ptsH), found in Streptomyces coelicolor (strain ATCC BAA-471 / A3(2) / M145).